The sequence spans 394 residues: Chorismate synthase (394 aa).

Arg-48 contacts NADP(+). The tract at residues 52-90 (QSMITTSRGEPDEVSIQSGLQDGYTTGTPIGMTIENKDA) is disordered. Residues 66 to 79 (SIQSGLQDGYTTGT) are compositionally biased toward polar residues. FMN is bound by residues 125 to 127 (RSS), Gly-297, 312 to 316 (HAPTS), and Arg-339.

This sequence belongs to the chorismate synthase family. FMNH2 serves as cofactor.

It carries out the reaction 5-O-(1-carboxyvinyl)-3-phosphoshikimate = chorismate + phosphate. Its pathway is metabolic intermediate biosynthesis; chorismate biosynthesis; chorismate from D-erythrose 4-phosphate and phosphoenolpyruvate: step 7/7. Catalyzes the anti-1,4-elimination of the C-3 phosphate and the C-6 proR hydrogen from 5-enolpyruvylshikimate-3-phosphate (EPSP) to yield chorismate, which is the branch point compound that serves as the starting substrate for the three terminal pathways of aromatic amino acid biosynthesis. This reaction introduces a second double bond into the aromatic ring system. This Halobacterium salinarum (strain ATCC 700922 / JCM 11081 / NRC-1) (Halobacterium halobium) protein is Chorismate synthase.